The chain runs to 956 residues: Zinc finger CCHC domain-containing protein 14 (956 aa).

Disordered stretches follow at residues 25-50, 78-99, 206-229, 243-276, 361-464, 485-505, 543-583, and 750-786; these read SSLNSGGGGGGGGGGGGKSAPGPSGA, ALHTSAHSTEESLPKRPLGKHG, SSSSPSQQLQSPSPGNPSLPKVGA, GIPSSQSSAQHHLQHSASTSASLPHCSHTGGTGS, KEKS…EKEK, PVQNETGSSPAAHHPLPPQLM, LEER…QGLS, and FYSGGAGSSSPGNIPASSQSHHHHHHHQQPPAPPQPA. Positions 29–43 are enriched in gly residues; the sequence is SGGGGGGGGGGGGKS. Composition is skewed to low complexity over residues 206–225 and 246–265; these read SSSSPSQQLQSPSPGNPSLP and SSQSSAQHHLQHSASTSASL. The segment covering 369 to 389 has biased composition (polar residues); that stretch reads LNSSAPSLVTSSGVARVTPTS. Over residues 423–432 the composition is skewed to low complexity; sequence SSEYSSSSSS. Over residues 438–464 the composition is skewed to basic and acidic residues; it reads VREESSDSAEESDRRVDIHVEGTEKEK. Low complexity predominate over residues 750 to 768; sequence FYSGGAGSSSPGNIPASSQ. The segment at 913-930 adopts a CCHC-type zinc-finger fold; sequence LSCYNCGATGHRAQDCKQ.

The chain is Zinc finger CCHC domain-containing protein 14 (Zcchc14) from Mus musculus (Mouse).